Consider the following 537-residue polypeptide: Tegument protein BRRF2 (537 aa).

Disordered regions lie at residues 321-366 (RPRF…AVPP), 378-398 (AKQNRGGMGSLHLAKPEETSP), 414-466 (SKQH…DEEF), and 486-537 (GLRV…LSVV). Residues 334 to 347 (EPQQTCSQLTSRGN) show a composition bias toward polar residues. Low complexity predominate over residues 423–441 (SSQAAPSFSSVAPVASLSG). The segment covering 492 to 517 (DEDEDGSEDGEFSDLDLSDSDHEGDE) has biased composition (acidic residues).

Belongs to the lymphocryptovirus BRRF2 family.

The protein localises to the virion tegument. This is Tegument protein BRRF2 from Homo sapiens (Human).